Consider the following 1309-residue polypeptide: Phospholipase A I (1309 aa).

4 LRR repeats span residues 155 to 178 (LPLLEKLCLEHNKLSVLPPEIGKL), 180 to 201 (NLKILRVDNNMLISVPVELRQC), 203 to 223 (GLVELSLEHNKLVRPLLDFRA), and 224 to 248 (MAGLRILRLFGNPLEFLPEILPLHQ). ARM repeat units follow at residues 315-356 (DEGN…SLAR), 401-439 (SVSQKMLTKDMLKALKSLCAHKNPEVQRQALLAVGNLAF), and 440-481 (CLEN…ILGE). The 245-residue stretch at 502–746 (LTMDGGGMKG…VANNPTIFAI (245 aa)) folds into the PNPLA domain. The GXGXXG motif lies at 506-511 (GGGMKG). The GXSXG motif lies at 538–542 (GTSTG). Ser540 functions as the Nucleophile in the catalytic mechanism. The active-site Proton acceptor is the Asp733. The DGA/G motif lies at 733-735 (DGA). The interval 1183–1253 (VIGPSNEPQE…EDSDHEKTNR (71 aa)) is disordered. Residues 1188–1208 (NEPQETPLITSQGSSEYNIGD) are compositionally biased toward polar residues. Residues 1216–1235 (GEEEDEDEEVNEETEREEME) are compositionally biased toward acidic residues.

Belongs to the patatin family.

Its subcellular location is the plastid. It localises to the chloroplast. Possesses non-specific lipolytic acyl hydrolase (LAH) activity. Catalyzes the hydrolysis of the galactolipids monogalactosyldiacylglycerol (MGDG) and digalactosyldiacylglycerol (DGDG), and less efficiently the phoshpolipids phosphatidylcholine (PC), phosphatidylethanolamine (PE), phosphatidylglycerol (PG), phosphatidylserine (PS) and phosphatidylinositol (PI). Hydrolyzes phospholipids at both the sn-1 and sn-2 positions. Involved in basal jasmonic acid production and promotes resistance to the necrotrophic fungal pathogen Botrytis cinerea. The chain is Phospholipase A I (PLA1) from Arabidopsis thaliana (Mouse-ear cress).